A 512-amino-acid chain; its full sequence is Cytochrome P450 monooxygenase pbrB (512 aa).

Residues 6–29 form a helical membrane-spanning segment; it reads LSFPAAVGAAFGAFAIYVVARCIY. A heme-binding site is contributed by Cys452.

It belongs to the cytochrome P450 family. Heme serves as cofactor.

The protein localises to the membrane. It participates in secondary metabolite biosynthesis; terpenoid biosynthesis. Functionally, cytochrome P450 monooxygenase; part of the gene cluster that mediates the biosynthesis of the sesquiterpenoid aspterric acid (AA), an inhibitor of dihydroxy-acid dehydratase (DHAD) effective as an herbicide. PbrB catalyzes the second step within the pathway and converts (-)-daucane produced by the terpene cyclase pbrA into an alpha-epoxy carboxylate intermediate which is further converted into the tricyclic aspterric acid by the cytochrome P450 monooxygenase pbrC. The protein is Cytochrome P450 monooxygenase pbrB of Penicillium brasilianum.